The chain runs to 128 residues: Large ribosomal subunit protein bL19 (128 aa).

It belongs to the bacterial ribosomal protein bL19 family.

This protein is located at the 30S-50S ribosomal subunit interface and may play a role in the structure and function of the aminoacyl-tRNA binding site. In Herminiimonas arsenicoxydans, this protein is Large ribosomal subunit protein bL19.